The sequence spans 309 residues: Ribonuclease Z (309 aa).

Residues His-63, His-65, Asp-67, His-68, His-141, Asp-212, and His-270 each contribute to the Zn(2+) site. Asp-67 acts as the Proton acceptor in catalysis.

It belongs to the RNase Z family. Homodimer. The cofactor is Zn(2+).

It catalyses the reaction Endonucleolytic cleavage of RNA, removing extra 3' nucleotides from tRNA precursor, generating 3' termini of tRNAs. A 3'-hydroxy group is left at the tRNA terminus and a 5'-phosphoryl group is left at the trailer molecule.. Functionally, zinc phosphodiesterase, which displays some tRNA 3'-processing endonuclease activity. Probably involved in tRNA maturation, by removing a 3'-trailer from precursor tRNA. In Halalkalibacterium halodurans (strain ATCC BAA-125 / DSM 18197 / FERM 7344 / JCM 9153 / C-125) (Bacillus halodurans), this protein is Ribonuclease Z.